A 1180-amino-acid chain; its full sequence is Tudor domain-containing protein 1 (1180 aa).

Disordered regions lie at residues 1–66 (MSVK…KKNN) and 79–138 (SQED…RPAK). Residues 27 to 41 (NFEKNENKLPPHESL) show a composition bias toward basic and acidic residues. Composition is skewed to polar residues over residues 79-91 (SQEDNSVSSNPNG) and 110-122 (NSVSPPSAESNSP). Residues C170, C173, C181, C184, C190, C194, H202, and C206 each contribute to the Zn(2+) site. Residues 170 to 206 (CHRCGLFGSLRCSQCKQTYYCSTACQRRDWSAHSIVC) form an MYND-type zinc finger. In terms of domain architecture, Tudor 1 spans 312 to 372 (IPVKGEVCIA…YHLNRNIDLF (61 aa)). Residues 450–469 (SGQDSKKENADQSDPEDVGK) are disordered. Tudor domains are found at residues 541-600 (YPAI…LLEL), 762-821 (KAEI…FLNL), and 990-1048 (RPRI…HLAL).

The protein belongs to the TDRD1 family. Found in a mRNP complex, at least composed of TDRD1, TDRD6, TDRD7 and DDX4. Interacts with MAEL. Interacts with PIWIL1, PIWIL2 and PIWIL4 (when methylated on arginine residues). Interacts with TDRD12. As to expression, testis and ovary specific. Also expressed in several cancers.

It is found in the cytoplasm. Its function is as follows. Plays a central role during spermatogenesis by participating in the repression transposable elements and preventing their mobilization, which is essential for the germline integrity. Acts via the piRNA metabolic process, which mediates the repression of transposable elements during meiosis by forming complexes composed of piRNAs and Piwi proteins and governs the methylation and subsequent repression of transposons. Required for the localization of Piwi proteins to the meiotic nuage. Involved in the piRNA metabolic process by ensuring the entry of correct transcripts into the normal piRNA pool and limiting the entry of cellular transcripts into the piRNA pathway. May act by allowing the recruitment of piRNA biogenesis or loading factors that ensure the correct entry of transcripts and piRNAs into Piwi proteins. This is Tudor domain-containing protein 1 (TDRD1) from Homo sapiens (Human).